The primary structure comprises 77 residues: U11-lycotoxin-Ls1b (77 aa).

Positions 1–20 (MKLIIFTGLALFAIVSLIEA) are cleaved as a signal peptide. A propeptide spanning residues 21 to 26 (EEESGR) is cleaved from the precursor.

It belongs to the neurotoxin 19 (CSTX) family. 10 (U11-Lctx) subfamily. Post-translationally, contains 4 disulfide bonds. Expressed by the venom gland.

The protein localises to the secreted. The polypeptide is U11-lycotoxin-Ls1b (Lycosa singoriensis (Wolf spider)).